A 1031-amino-acid chain; its full sequence is MTNKISFRDIINRKDWENPVITNWHRLPIHTEMNYSKSLNEDKQKTIQSLNGNWCFSYFSKVTDVPENWADRDLTKSNIMPVPSNWQLHGYDQPIYSNVAYPFPANPPYLPEENPTACYSRIFQLNDDWLQSGQNHVIFNGVGSAFHLWLNGQWIGYSEDSRLPAEFDLTKYLKSGKNRISVMVLRWSKGSYFEDQDMWRMSGIFRDVEVKHLPATYLQDYQLQTDLDDDLDQAKITIKAQVAGKNFSQNKLRTRLYFANEKVADQSSRLSTRAVDERGPLDNQFIAELNLKDPYLWSAELPYLYQLVIELLTDDGDILQVEKVNIGVRKVEIKNGLLKLNGKPLLIRGTNKHEFDSKKGYAVDEETMIQDIKAMKRNNFNAVRCSHYPNNRRWYELCDQYGLYVVDEANIETHGMVPMNRLTNDPVYLPLMSDRVTRMVTRDRNHPSIIIWSLGNESGYGRNHAALYNWIKQSDLSRPVQYEGGGANTAVTDIIVPMYARVEQDQIESVNSKWSLKKWIGLPGETRPLILCEYAHDMGNSLGGFGKYWQAFHKYPRLQGGFIWDWVDQGLLKKDVNGNDFYAYGGDFKDQPNDRQFCLDGLLFPDRTPKPAMHEVKYWQQYYLFNLQRNPLGQAESFTVTNDYSFKKSSNERLHYQIKSENEIVIDKYIDLVLNPGESLLIKLPKGRSSTSSLLDIDISLIKGNSWAPSGFKIASEQYVLAKKFGPTNAVTAATNKISLIENKDTNTFEIKLDDQKWQFAKNSGLLVSWSKSGNENLLDALRDQFTRAPLDNDIGVSKVDHIDPNAWYERWKSAGMYNLKTNLVSIDAEQLERAVLIRTEHSYSNHFQILFKSSKIYRIDANGTMTVTVDVSLAQGIPFPARIGLTCHLADQITDVSYTGLGPFENYPDRQSAAQYGHWQMELDDLYTPYIFPSENGSRGQVSQLEFGKQKISAYHEQNFSFNLSRFSKQQLARISHRNLLQAENGVWLSIDGYRMGVGGDDSWSPSVAPEYLLSNNYYHYAFQWCRKDI.

Residues Asn-98 and Asp-197 each contribute to the substrate site. Position 197 (Asp-197) interacts with Na(+). Residues Glu-412, His-414, and Glu-457 each contribute to the Mg(2+) site. Substrate-binding positions include Glu-457 and 533-536; that span reads EYAH. The Proton donor role is filled by Glu-457. Residue Glu-533 is the Nucleophile of the active site. Residue Asn-593 participates in Mg(2+) binding. Residues Phe-597 and Asp-600 each coordinate Na(+). Asp-600 and Trp-1005 together coordinate substrate.

Belongs to the glycosyl hydrolase 2 family. As to quaternary structure, homotetramer. Mg(2+) serves as cofactor. It depends on Na(+) as a cofactor.

The catalysed reaction is Hydrolysis of terminal non-reducing beta-D-galactose residues in beta-D-galactosides.. In Oenococcus oeni (strain ATCC BAA-331 / PSU-1), this protein is Beta-galactosidase.